The chain runs to 179 residues: MIMHHGRESKRRRRQVIKIPNDDVLEEIIVRLPVKTLTRFQTVSKHWRHTIKSRNGSKPSIRYKTMRLEWSLSRLVGEEEYLTSKKHKERRILFSKSVDGLFCLYSGVDMKQPIMVINPDTRWSKKLPLARIQRKNYLDSNKVEFSRLGFGKDSVTGTYKLAVIPPPPNHGIKHENMSF.

The 37-residue stretch at 19–55 folds into the F-box domain; that stretch reads IPNDDVLEEIIVRLPVKTLTRFQTVSKHWRHTIKSRN.

In Arabidopsis thaliana (Mouse-ear cress), this protein is Probable F-box protein At3g25550.